The chain runs to 388 residues: Lysocardiolipin acyltransferase 1 (388 aa).

Transmembrane regions (helical) follow at residues 9-29 and 46-66; these read FLLFLLLGSVFGSVFMLGPLL and IVATWLTLPVALLELVLGVKV. The HXXXXD motif signature appears at 85-90; sequence HRTRLD. 2 helical membrane passes run 321–341 and 342–362; these read IILVASLLYWSVFITAACASL and CLCPPAQFYFLFMVVFFLCQQ.

It belongs to the 1-acyl-sn-glycerol-3-phosphate acyltransferase family.

The protein resides in the endoplasmic reticulum membrane. It carries out the reaction a 1-acyl-sn-glycero-3-phosphate + an acyl-CoA = a 1,2-diacyl-sn-glycero-3-phosphate + CoA. The enzyme catalyses a 1-acyl-sn-glycero-3-phospho-(1D-myo-inositol) + an acyl-CoA = a 1,2-diacyl-sn-glycero-3-phospho-(1D-myo-inositol) + CoA. It catalyses the reaction 1-acyl-sn-glycero-3-phospho-(1'-sn-glycerol) + an acyl-CoA = a 1,2-diacyl-sn-glycero-3-phospho-(1'-sn-glycerol) + CoA. The catalysed reaction is 1-hexadecanoyl-sn-glycero-3-phosphate + (9Z)-octadecenoyl-CoA = 1-hexadecanoyl-2-(9Z-octadecenoyl)-sn-glycero-3-phosphate + CoA. It carries out the reaction 1-(9Z-octadecenoyl)-sn-glycero-3-phosphate + (9Z)-octadecenoyl-CoA = 1,2-di-(9Z-octadecenoyl)-sn-glycero-3-phosphate + CoA. The enzyme catalyses 1-(9Z,12Z)-octadecadienoyl-sn-glycero-3-phosphate + (9Z)-octadecenoyl-CoA = 1-(9Z,12Z)-octadecadienoyl-2-(9Z)-octadecenoyl-sn-glycero-3-phosphate + CoA. It catalyses the reaction 1-(9Z,12Z,15Z)-octadecatrienoyl-sn-glycero-3-phosphate + (9Z)-octadecenoyl-CoA = 1-(9Z,12Z,15Z)-octadecatrienoyl-2-(9Z)-octadecenoyl-sn-glycero-3-phosphate + CoA. The catalysed reaction is 1-(9Z-octadecenoyl)-sn-glycero-3-phosphate + hexadecanoyl-CoA = 1-(9Z)-octadecenoyl-2-hexadecanoyl-sn-glycero-3-phosphate + CoA. It carries out the reaction 1-(9Z-octadecenoyl)-sn-glycero-3-phosphate + octadecanoyl-CoA = 1-(9Z-octadecenoyl)-2-octadecanoyl-sn-glycero-3-phosphate + CoA. The enzyme catalyses 1-acyl-sn-glycero-3-phospho-(1'-sn-glycerol) + (9Z)-octadecenoyl-CoA = 1-acyl-2-(9Z-octadecenoyl)-sn-glycero-3-phospho-(1'-sn-glycerol) + CoA. It catalyses the reaction a 1-acyl-sn-glycero-3-phospho-(1D-myo-inositol) + (9Z)-octadecenoyl-CoA = a 1-acyl-2-(9Z-octadecenoyl)-sn-glycero-3-phospho-(1D-myo-inositol) + CoA. The catalysed reaction is 1-hexadecanoyl-sn-glycero-3-phospho-(1D-myo-inositol) + hexadecanoyl-CoA = 1,2-dihexadecanoyl-sn-glycero-3-phospho-(1D-myo-inositol) + CoA. It carries out the reaction 1-hexadecanoyl-sn-glycero-3-phospho-(1D-myo-inositol) + octadecanoyl-CoA = 1-hexadecanoyl-2-octadecanoyl-sn-glycero-3-phospho-(1D-myo-inositol) + CoA. The enzyme catalyses 1-hexadecanoyl-sn-glycero-3-phospho-(1D-myo-inositol) + (9Z)-octadecenoyl-CoA = 1-hexadecanoyl-2-(9Z-octadecenoyl)-sn-glycero-3-phospho-(1D-myo-inositol) + CoA. It catalyses the reaction 1-hexadecanoyl-sn-glycero-3-phospho-(1D-myo-inositol) + (9Z,12Z)-octadecadienoyl-CoA = 1-hexadecanoyl-2-(9Z,12Z-octadecadienoyl)-sn-glycero-3-phospho-(1D-myo-inositol) + CoA. The catalysed reaction is 1-hexadecanoyl-sn-glycero-3-phospho-(1D-myo-inositol) + (5Z,8Z,11Z,14Z)-eicosatetraenoyl-CoA = 1-hexadecanoyl-2-(5Z,8Z,11Z,14Z-eicosatetraenoyl)-sn-glycero-3-phospho-D-myo-inositol + CoA. It carries out the reaction 1-hexadecanoyl-sn-glycero-3-phospho-(1'-sn-glycerol) + hexadecanoyl-CoA = 1,2-dihexadecanoyl-sn-glycero-3-phospho-(1'-sn-glycerol) + CoA. The enzyme catalyses 1-hexadecanoyl-sn-glycero-3-phospho-(1'-sn-glycerol) + octadecanoyl-CoA = 1-hexadecanoyl-2-octadecanoyl-sn-glycero-3-phospho-(1'-sn-glycerol) + CoA. It catalyses the reaction 1-hexadecanoyl-sn-glycero-3-phospho-(1'-sn-glycerol) + (9Z)-octadecenoyl-CoA = 1-hexadecanoyl-2-(9Z-octadecenoyl)-sn-glycero-3-phospho-(1'-sn-glycerol) + CoA. The catalysed reaction is 1-hexadecanoyl-sn-glycero-3-phospho-(1'-sn-glycerol) + (9Z,12Z)-octadecadienoyl-CoA = 1-hexadecanoyl-2-(9Z,12Z-octadecadienoyl)-sn-glycero-3-phospho-(1'-sn-glycerol) + CoA. It carries out the reaction 1-tetradecanoyl-sn-glycero-3-phospho-(1'-sn-glycerol) + (9Z)-octadecenoyl-CoA = 1-tetradecanoyl-2-(9Z-octadecenoyl)-sn-glycero-3-phospho-(1'-sn-glycerol) + CoA. The enzyme catalyses 1-octadecanoyl-sn-glycero-3-phospho-(1'-sn-glycerol) + (9Z)-octadecenoyl-CoA = 1-octadecanoyl-2-(9Z-octadecenoyl)-sn-glycero-3-phospho-(1'-sn-glycerol) + CoA. It catalyses the reaction 1-(9Z-octadecenoyl)-sn-glycero-3-phospho-(1'-sn-glycerol) + (9Z)-octadecenoyl-CoA = 1,2-di-(9Z-octadecenoyl)-sn-glycero-3-phospho-(1'-sn-glycerol) + CoA. The catalysed reaction is 1-hexadecanoyl-sn-glycero-3-phospho-(1D-myo-inositol) + dodecanoyl-CoA = 1-hexadecanoyl-2-dodecanoyl-sn-glycero-3-phospho-(1D-myo-inositol) + CoA. It carries out the reaction 1',3'-bis-[1-acyl-sn-glycero-3-phospho]-glycerol + (9Z)-octadecenoyl-CoA = 1'-[1-acyl-2-(9Z)-octadecenoyl-sn-glycero-3-phospho],3'-[1-acyl,2-hydroxy-sn-glycero-3-phospho]-glycerol + CoA. The enzyme catalyses 1'-[1,2-diacyl-sn-glycero-3-phospho],3'-[1-acyl-sn-glycero-3-phospho]-glycerol + (9Z)-octadecenoyl-CoA = 1'-[1,2-diacyl-sn-glycero-3-phospho],3'-[1-acyl,2-(9Z)-octadecenoyl-sn-glycero-3-phospho]-glycerol + CoA. It catalyses the reaction 1'-[1,2-diacyl-sn-glycero-3-phospho],3'-[1-acyl-sn-glycero-3-phospho]-glycerol + (9Z,12Z)-octadecadienoyl-CoA = 1'-[1,2-diacyl-sn-glycero-3-phospho],3'-[1-acyl,2-(9Z,12Z)-octadecadienoyl-sn-glycero-3-phospho]-glycerol + CoA. The catalysed reaction is 1'-[1,2-diacyl-sn-glycero-3-phospho],3'-[1-acyl-sn-glycero-3-phospho]-glycerol + dodecanoyl-CoA = 1'-[1,2-diacyl-sn-glycero-3-phospho],3'-[1-acyl,2-dodecanoyl-sn-glycero-3-phospho]-glycerol + CoA. It carries out the reaction 1',3'-bis-[1-acyl-sn-glycero-3-phospho]-glycerol + dodecanoyl-CoA = 1'-[1-acyl-2-dodecanoyl-sn-glycero-3-phospho],3'-[1-acyl,2-hydroxy-sn-glycero-3-phospho]-glycerol + CoA. The enzyme catalyses a 1-acyl-sn-glycero-3-phosphate + (9Z)-octadecenoyl-CoA = a 1-acyl-2-(9Z-octadecenoyl)-sn-glycero-3-phosphate + CoA. It catalyses the reaction 1',3'-bis-[1-acyl-sn-glycero-3-phospho]-glycerol + (9Z,12Z)-octadecadienoyl-CoA = 1'-[1-acyl-2-(9Z,12Z)-octadecadienoyl-sn-glycero-3-phospho],3'-[1-acyl,2-hydroxy-sn-glycero-3-phospho]-glycerol + CoA. The catalysed reaction is 1',3'-bis-[1-acyl-sn-glycero-3-phospho]-glycerol + hexadecanoyl-CoA = 1'-[1-acyl-2-hexadecanoyl-sn-glycero-3-phospho],3'-[1-acyl,2-hydroxy-sn-glycero-3-phospho]-glycerol + CoA. It carries out the reaction 1',3'-bis-[1-acyl-sn-glycero-3-phospho]-glycerol + octadecanoyl-CoA = 1'-[1-acyl-2-octadecanoyl-sn-glycero-3-phospho],3'-[1-acyl,2-hydroxy-sn-glycero-3-phospho]-glycerol + CoA. The enzyme catalyses 1'-[1,2-diacyl-sn-glycero-3-phospho],3'-[1-acyl-sn-glycero-3-phospho]-glycerol + octanoyl-CoA = 1'-[1,2-diacyl-sn-glycero-3-phospho],3'-[1-acyl,2-octanoyl-sn-glycero-3-phospho]-glycerol + CoA. It catalyses the reaction 1',3'-bis-[1-acyl-sn-glycero-3-phospho]-glycerol + octanoyl-CoA = 1'-[1-acyl-2-octanoyl-sn-glycero-3-phospho],3'-[1-acyl,2-hydroxy-sn-glycero-3-phospho]-glycerol + CoA. The catalysed reaction is 1'-[1,2-diacyl-sn-glycero-3-phospho],3'-[1-acyl-sn-glycero-3-phospho]-glycerol + hexadecanoyl-CoA = 1'-[1,2-diacyl-sn-glycero-3-phospho],3'-[1-acyl,2-hexadecanoyl-sn-glycero-3-phospho]-glycerol + CoA. It carries out the reaction 1'-[1,2-diacyl-sn-glycero-3-phospho],3'-[1-acyl-sn-glycero-3-phospho]-glycerol + (5Z,8Z,11Z,14Z)-eicosatetraenoyl-CoA = 1'-[1,2-diacyl-sn-glycero-3-phospho],3'-[1-acyl,2-(5Z,8Z,11Z,14Z)-eicosatetraenoyl-sn-glycero-3-phospho]-glycerol + CoA. The enzyme catalyses 1',3'-bis-[1-acyl-sn-glycero-3-phospho]-glycerol + (5Z,8Z,11Z,14Z)-eicosatetraenoyl-CoA = 1'-[1-acyl-2-(5Z,8Z,11Z,14Z)-eicosatetraenoyl-sn-glycero-3-phospho],3'-[1-acyl,2-hydroxy-sn-glycero-3-phospho]-glycerol + CoA. It catalyses the reaction a 1-acyl-sn-glycero-3-phospho-(1D-myo-inositol) + octadecanoyl-CoA = a 1-acyl-2-octadecanoyl-sn-glycero-3-phospho-(1D-myo-inositol) + CoA. The catalysed reaction is a 2-acyl-sn-glycero-3-phospho-D-myo-inositol + octadecanoyl-CoA = 1-octadecanoyl-2-acyl-sn-glycero-3-phospho-1D-myo-inositol + CoA. The protein operates within phospholipid metabolism; CDP-diacylglycerol biosynthesis; CDP-diacylglycerol from sn-glycerol 3-phosphate: step 2/3. Exhibits acyl-CoA:lysocardiolipin acyltransferase (ALCAT) activity; catalyzes the reacylation of lyso-cardiolipin to cardiolipin (CL), a key step in CL remodeling. Recognizes both monolysocardiolipin and dilysocardiolipin as substrates with a preference for linoleoyl-CoA and oleoyl-CoA as acyl donors. Also exhibits 1-acyl-sn-glycerol-3-phosphate acyltransferase activity (AGPAT) activity; converts 1-acyl-sn-glycerol-3- phosphate (lysophosphatidic acid or LPA) into 1,2-diacyl-sn-glycerol-3- phosphate (phosphatidic acid or PA) by incorporating an acyl moiety at the sn-2 position of the glycerol backbone. Possesses both lysophosphatidylinositol acyltransferase (LPIAT) and lysophosphatidylglycerol acyltransferase (LPGAT) activities. Required for establishment of the hematopoietic and endothelial lineages. This Danio rerio (Zebrafish) protein is Lysocardiolipin acyltransferase 1 (lclat1).